A 108-amino-acid polypeptide reads, in one-letter code: Circadian clock oscillator protein KaiB (108 aa).

This sequence belongs to the KaiB family. Undergoes a major conformational rearrangment; in the free state forms homotetramers with 2 dimers. When bound to the CI domain of KaiC, KaiA or CikA switches to a monomeric thioredoxin-fold (KaiB(fs)). The KaiABC complex composition changes during the circadian cycle to control KaiC phosphorylation. Complexes KaiC(6), KaiA(2-4):KaiC(6), KaiB(6):KaiC(6) and KaiC(6):KaiB(6):KaiA(12) are among the most important forms, many form cooperatively. Binds to KaiA; 1 KaiB(fs) binds to the KaiA homodimer. Binds to the B-loop in the CI domain of KaiC; SasA and KaiB compete to bind to the CI domain. Binding to KaiC CI domain occurs 1:1. KaiA and CikA bind to the same region of KaiB(fs) and therefore compete.

Functionally, key component of the KaiABC oscillator complex, which constitutes the main circadian regulator in cyanobacteria. Its composition changes during the circadian cycle to control KaiC phosphorylation. KaiA stimulates KaiC autophosphorylation, while KaiB sequesters KaiA, leading to KaiC autodephosphorylation. KaiA binding to KaiC yields KaiA(2-4):KaiC(6) complexes which stimulate KaiC autophosphorylation. Phospho-Ser-431 KaiC accumulation triggers binding of KaiB to form the KaiB(6):KaiC(6) complex, leading to changes in the output regulators CikA and SasA. KaiB switches to a thioredoxin-like fold (KaiB(fs)) in complex with KaiC. KaiB(6):KaiC(6) formation exposes a site for KaiA binding that sequesters KaiA from the CII domain, making the KaiC(6):KaiB(6):KaiA(12) complex that results in KaiC autodephosphorylation. Complete dephosphorylation of KaiC leads to dissociation of KaiA(2):KaiB(1), completing 1 cycle of the Kai oscillator. A metamorphic protein which reversibly switches between an inactive tetrameric fold and a rare, thioredoxin-like monomeric fold (KaiB(fs)). KaiB(fs) binds phospho-KaiC, KaiA and CikA. KaiA and CikA compete for binding to KaiB(fs), and KaiB(fs) and SasA compete for binding to KaiC, thus the clock oscillator and output signal pathway are tightly coupled. This Thermosynechococcus vestitus (strain NIES-2133 / IAM M-273 / BP-1) protein is Circadian clock oscillator protein KaiB.